The sequence spans 176 residues: Cystatin-related protein 2 (176 aa).

The signal sequence occupies residues 1–26 (MYKTLCGTQLLLAIFVLFLNFSHATA). The propeptide occupies 27 to 30 (KGTR). Asn-71 carries an N-linked (GlcNAc...) asparagine glycan. Cystine bridges form between Cys-129–Cys-139 and Cys-153–Cys-173.

It belongs to the cystatin family. Prostate.

The polypeptide is Cystatin-related protein 2 (Crp2) (Rattus norvegicus (Rat)).